The chain runs to 396 residues: 8-amino-7-oxononanoate synthase (396 aa).

Arg-19 provides a ligand contact to substrate. Residue 106–107 (GY) coordinates pyridoxal 5'-phosphate. His-131 provides a ligand contact to substrate. Residues Ser-176, His-204, and Thr-233 each contribute to the pyridoxal 5'-phosphate site. Lys-236 carries the N6-(pyridoxal phosphate)lysine modification. Thr-350 serves as a coordination point for substrate.

It belongs to the class-II pyridoxal-phosphate-dependent aminotransferase family. BioF subfamily. Homodimer. It depends on pyridoxal 5'-phosphate as a cofactor.

It catalyses the reaction 6-carboxyhexanoyl-[ACP] + L-alanine + H(+) = (8S)-8-amino-7-oxononanoate + holo-[ACP] + CO2. It participates in cofactor biosynthesis; biotin biosynthesis. Its function is as follows. Catalyzes the decarboxylative condensation of pimeloyl-[acyl-carrier protein] and L-alanine to produce 8-amino-7-oxononanoate (AON), [acyl-carrier protein], and carbon dioxide. The sequence is that of 8-amino-7-oxononanoate synthase from Pseudomonas syringae pv. syringae (strain B728a).